The chain runs to 1399 residues: DNA-directed RNA polymerase subunit beta' (1399 aa).

Positions 70, 72, 85, and 88 each coordinate Zn(2+). Mg(2+) is bound by residues aspartate 460, aspartate 462, and aspartate 464. Positions 814, 888, 895, and 898 each coordinate Zn(2+).

This sequence belongs to the RNA polymerase beta' chain family. The RNAP catalytic core consists of 2 alpha, 1 beta, 1 beta' and 1 omega subunit. When a sigma factor is associated with the core the holoenzyme is formed, which can initiate transcription. Mg(2+) serves as cofactor. Requires Zn(2+) as cofactor.

The enzyme catalyses RNA(n) + a ribonucleoside 5'-triphosphate = RNA(n+1) + diphosphate. In terms of biological role, DNA-dependent RNA polymerase catalyzes the transcription of DNA into RNA using the four ribonucleoside triphosphates as substrates. This chain is DNA-directed RNA polymerase subunit beta', found in Pseudomonas entomophila (strain L48).